The following is a 278-amino-acid chain: Large ribosomal subunit protein uL2 (278 aa).

The disordered stretch occupies residues 226–278 (NPIDHPHGGGEGRTSGGRHPVTPWGKPTKGKKTRSNKSTDKFILISRHKRKKK).

It belongs to the universal ribosomal protein uL2 family. As to quaternary structure, part of the 50S ribosomal subunit. Forms a bridge to the 30S subunit in the 70S ribosome.

Its function is as follows. One of the primary rRNA binding proteins. Required for association of the 30S and 50S subunits to form the 70S ribosome, for tRNA binding and peptide bond formation. It has been suggested to have peptidyltransferase activity; this is somewhat controversial. Makes several contacts with the 16S rRNA in the 70S ribosome. This chain is Large ribosomal subunit protein uL2, found in Rhodopseudomonas palustris (strain HaA2).